The chain runs to 492 residues: Catalase-1 (492 aa).

Active-site residues include His65 and Asn138. Tyr348 serves as a coordination point for heme.

Belongs to the catalase family. Homotetramer and heterotetramer. At least six or seven isozymes are produced from a mixture of 3 gene products. Interacts with NCA1. Interacts with LSD1. Requires heme as cofactor.

It is found in the cytoplasm. It carries out the reaction 2 H2O2 = O2 + 2 H2O. In terms of biological role, occurs in almost all aerobically respiring organisms and serves to protect cells from the toxic effects of hydrogen peroxide. The sequence is that of Catalase-1 (CAT1) from Arabidopsis thaliana (Mouse-ear cress).